Reading from the N-terminus, the 438-residue chain is Protein maelstrom 1 (438 aa).

The HMG box DNA-binding region spans 2 to 69; it reads APKKRNGFMT…LERTAKKERL (68 aa). Positions 374–438 are disordered; it reads KEMGSRDLSP…NMGAGKKIAR (65 aa). The segment covering 381 to 391 has biased composition (polar residues); that stretch reads LSPSSSHQSVS.

This sequence belongs to the maelstrom family.

Its subcellular location is the cytoplasm. It is found in the nucleus. Functionally, involved both in the piRNA and miRNA metabolic processes. As a component of the meiotic nuage, plays a central role during oogenesis by repressing transposable elements and preventing their mobilization, which is essential for the germline integrity. Repression of transposable elements is mediated via the piRNA metabolic process, which mediates the repression of transposable elements during meiosis by forming complexes composed of piRNAs and Piwi proteins and governs the repression of transposons. As a nuclear component, it is required for proper differentiation in the germline stem cell (GSC) lineage by repressing microRNA-7 (miR-7), thereby acting as an indirect regulator of bag-of-marbles (Bam). Acts by binding to the promoter of miR-7 gene and repressing its expression; miR-7 repression alleviates the Bam repression by miR-7, thereby allowing differentiation in the germline stem cell (GSC) lineage. In Drosophila persimilis (Fruit fly), this protein is Protein maelstrom 1 (mael1).